Here is a 1444-residue protein sequence, read N- to C-terminus: Probable chitinase LysM18 (1444 aa).

2 consecutive LysM domains span residues 256–302 and 321–369; these read STVQ…HFCC and TTYT…IICL. A Chitin-binding type-1 domain is found at 382-450; the sequence is NAECGPQVPG…TNGCISNCGT (69 aa). 4 disulfide bridges follow: Cys385/Cys413, Cys407/Cys419, Cys412/Cys426, and Cys444/Cys448. A GH18 domain is found at 461-831; that stretch reads YRKVGFYEGF…STSWTKFTSD (371 aa). Glu582 functions as the Proton donor in the catalytic mechanism. Chitin is bound by residues Tyr583 and Trp808.

Belongs to the glycosyl hydrolase 18 family. Chitinase class V subfamily.

It catalyses the reaction Random endo-hydrolysis of N-acetyl-beta-D-glucosaminide (1-&gt;4)-beta-linkages in chitin and chitodextrins.. Probable chitinase involved in the degradation of chitin, a component of the cell walls of fungi and exoskeletal elements of some animals (including worms and arthropods). Might be involved in manipulation of host defenses for successful infection. The polypeptide is Probable chitinase LysM18 (Penicillium expansum (Blue mold rot fungus)).